Here is a 606-residue protein sequence, read N- to C-terminus: Prostaglandin G/H synthase 1 (606 aa).

The first 30 residues, 1–30, serve as a signal peptide directing secretion; it reads MSRSSPSLRLPVLLLLLLLLLLPPPPPVLP. The EGF-like domain occupies 38-76; it reads PVNPCCYFPCQHQGVCVRVALDRYQCDCTRTGYSGPNCT. Intrachain disulfides connect Cys-42–Cys-53, Cys-43–Cys-165, Cys-47–Cys-63, and Cys-65–Cys-75. Residues Asn-74, Asn-110, and Asn-150 are each glycosylated (N-linked (GlcNAc...) asparagine). The active-site Proton acceptor is His-213. Residue Tyr-391 is the For cyclooxygenase activity of the active site. Residue His-394 coordinates heme b. Asn-416 carries an N-linked (GlcNAc...) asparagine glycan. A disulfide bridge links Cys-575 with Cys-581.

Belongs to the prostaglandin G/H synthase family. As to quaternary structure, homodimer. The cofactor is heme b.

It is found in the microsome membrane. The protein localises to the endoplasmic reticulum membrane. The catalysed reaction is (5Z,8Z,11Z,14Z)-eicosatetraenoate + AH2 + 2 O2 = prostaglandin H2 + A + H2O. It catalyses the reaction (5Z,8Z,11Z,14Z)-eicosatetraenoate + 2 O2 = prostaglandin G2. The enzyme catalyses prostaglandin G2 + AH2 = prostaglandin H2 + A + H2O. It carries out the reaction (9Z,12Z)-octadecadienoate + AH2 + O2 = (9R)-hydroxy-(10E,12Z)-octadecadienoate + A + H2O. The catalysed reaction is (9Z,12Z)-octadecadienoate + AH2 + O2 = (9S)-hydroxy-(10E,12Z)-octadecadienoate + A + H2O. It catalyses the reaction (9Z,12Z)-octadecadienoate + AH2 + O2 = (13S)-hydroxy-(9Z,11E)-octadecadienoate + A + H2O. The enzyme catalyses (9Z,12Z)-octadecadienoate + AH2 + O2 = (13R)-hydroxy-(9Z,11E)-octadecadienoate + A + H2O. It functions in the pathway lipid metabolism; prostaglandin biosynthesis. Its activity is regulated as follows. The cyclooxygenase activity is inhibited by nonsteroidal anti-inflammatory drugs (NSAIDs) including ibuprofen, flurbiprofen, ketoprofen, naproxen, flurbiprofen, anirolac, fenclofenac and diclofenac. In terms of biological role, dual cyclooxygenase and peroxidase that plays an important role in the biosynthesis pathway of prostanoids, a class of C20 oxylipins mainly derived from arachidonate ((5Z,8Z,11Z,14Z)-eicosatetraenoate, AA, C20:4(n-6)), with a particular role in the inflammatory response. The cyclooxygenase activity oxygenates AA to the hydroperoxy endoperoxide prostaglandin G2 (PGG2), and the peroxidase activity reduces PGG2 to the hydroxy endoperoxide prostaglandin H2 (PGH2), the precursor of all 2-series prostaglandins and thromboxanes. This complex transformation is initiated by abstraction of hydrogen at carbon 13 (with S-stereochemistry), followed by insertion of molecular O2 to form the endoperoxide bridge between carbon 9 and 11 that defines prostaglandins. The insertion of a second molecule of O2 (bis-oxygenase activity) yields a hydroperoxy group in PGG2 that is then reduced to PGH2 by two electrons. Involved in the constitutive production of prostanoids in particular in the stomach and platelets. In gastric epithelial cells, it is a key step in the generation of prostaglandins, such as prostaglandin E2 (PGE2), which plays an important role in cytoprotection. In platelets, it is involved in the generation of thromboxane A2 (TXA2), which promotes platelet activation and aggregation, vasoconstriction and proliferation of vascular smooth muscle cells. Can also use linoleate (LA, (9Z,12Z)-octadecadienoate, C18:2(n-6)) as substrate and produce hydroxyoctadecadienoates (HODEs) in a regio- and stereospecific manner, being (9R)-HODE ((9R)-hydroxy-(10E,12Z)-octadecadienoate) and (13S)-HODE ((13S)-hydroxy-(9Z,11E)-octadecadienoate) its major products. The sequence is that of Prostaglandin G/H synthase 1 (PTGS1) from Oryctolagus cuniculus (Rabbit).